Consider the following 541-residue polypeptide: MAKDIKFSADARESMVRGVDILADTVKVTLGPKGRNVVLEKAFGSPLITNDGVTIAKEIELEDHFENMGAKLVSEVASKTNDIAGDGTTTATVLTQAIVREGLKNVTAGANPIGIRRGIEAATTTAVEALKAVAQPVSGKEAIAQVASVSSRSEKVGDYISEAMERVGNDGVITIEESRGMETELEVVEGMQFDRGYLSQYMVTDNEKMVADLENPFILITDKKISNIQDILPLLEEVLKTSRPLLIIADDVDGEALPTLVLNKIRGTFNVVAVKAPGFGDRRKAMLEDIAVLTGGTVITEDLGLELKDATMAALGQAAKVTVDKDNTVIVEGAGSSEAISNRVSLIKSQLETTTSEFDREKLQERLAKLAGGVAVIKVGAATETELKEMKLRIEDALNATRAAVEEGIVAGGGTALINVMDKVAALELDGDAATGRNIVLRALEEPVRQIAYNAGYEGSVIIDKLKNSAAGVGFNAATGEWVDMIATGIIDPVKVTRSALQNAASVAGLILTTEAVVATKPEPAAPAMPQGMDPGMMGGF.

ATP-binding positions include 29-32, 86-90, G413, 476-478, and D492; these read TLGP, DGTTT, and NAA.

This sequence belongs to the chaperonin (HSP60) family. As to quaternary structure, forms a cylinder of 14 subunits composed of two heptameric rings stacked back-to-back. Interacts with the co-chaperonin GroES.

The protein resides in the cytoplasm. The catalysed reaction is ATP + H2O + a folded polypeptide = ADP + phosphate + an unfolded polypeptide.. Functionally, together with its co-chaperonin GroES, plays an essential role in assisting protein folding. The GroEL-GroES system forms a nano-cage that allows encapsulation of the non-native substrate proteins and provides a physical environment optimized to promote and accelerate protein folding. This chain is Chaperonin GroEL, found in Streptococcus equi subsp. zooepidemicus (strain MGCS10565).